Here is a 501-residue protein sequence, read N- to C-terminus: Cytochrome P450 monooxygenase notH (501 aa).

A helical transmembrane segment spans residues L11–F31. The N-linked (GlcNAc...) asparagine glycan is linked to N298. Heme is bound at residue C442.

Belongs to the cytochrome P450 family. Heme is required as a cofactor.

The protein resides in the membrane. It participates in alkaloid biosynthesis. Functionally, cytochrome P450 monooxygenase; part of the gene cluster that mediates the biosynthesis of notoamide, a fungal indole alkaloid that belongs to a family of natural products containing a characteristic bicyclo[2.2.2]diazaoctane core. The first step of notoamide biosynthesis involves coupling of L-proline and L-tryptophan by the bimodular NRPS notE, to produce cyclo-L-tryptophan-L-proline called brevianamide F. The reverse prenyltransferase notF then acts as a deoxybrevianamide E synthase and converts brevianamide F to deoxybrevianamide E via reverse prenylation at C-2 of the indole ring leading to the bicyclo[2.2.2]diazaoctane core. Deoxybrevianamide E is further hydroxylated at C-6 of the indole ring, likely catalyzed by the cytochrome P450 monooxygenase notG, to yield 6-hydroxy-deoxybrevianamide E. 6-hydroxy-deoxybrevianamide E is a specific substrate of the prenyltransferase notC for normal prenylation at C-7 to produce 6-hydroxy-7-prenyl-deoxybrevianamide, also called notoamide S. As the proposed pivotal branching point in notoamide biosynthesis, notoamide S can be diverted to notoamide E through an oxidative pyran ring closure putatively catalyzed by either notH cytochrome P450 monooxygenase or the notD FAD-linked oxidoreductase. This step would be followed by an indole 2,3-epoxidation-initiated pinacol-like rearrangement catalyzed by the notB FAD-dependent monooxygenase leading to the formation of notoamide C and notoamide D. On the other hand notoamide S is converted to notoamide T by notH (or notD), a bifunctional oxidase that also functions as the intramolecular Diels-Alderase responsible for generation of (+)-notoamide T. To generate antipodal (-)-notoaminide T, notH' (or notD') in Aspergillus versicolor is expected to catalyze a Diels-Alder reaction leading to the opposite stereochemistry. The remaining oxidoreductase notD (or notH) likely catalyzes the oxidative pyran ring formation to yield (+)-stephacidin A. The FAD-dependent monooxygenase notI is highly similar to notB and is predicted to catalyze a similar conversion from (+)-stephacidin A to (-)-notoamide B via the 2,3-epoxidation of (+)-stephacidin A followed by a pinacol-type rearrangement. Finally, it remains unclear which enzyme could be responsible for the final hydroxylation steps leading to notoamide A and sclerotiamide. The chain is Cytochrome P450 monooxygenase notH from Aspergillus sp. (strain MF297-2).